The sequence spans 1018 residues: Ubiquitin carboxyl-terminal hydrolase 35 (1018 aa).

In terms of domain architecture, USP spans 441-926 (IGLINLGNTC…TAYVLFYRQR (486 aa)). The Nucleophile role is filled by C450. Disordered stretches follow at residues 544–566 (QKLKQSSSPSPPEEPPAPSSTSV) and 610–757 (RLGS…GSEG). The segment covering 552-561 (PSPPEEPPAP) has biased composition (pro residues). S613 is modified (phosphoserine). Basic and acidic residues-rich tracts occupy residues 673–691 (QEERIEREEEGKEERTEKE), 699–709 (STRGEGEREKE), and 718–728 (KVEKETEKEAE). H862 functions as the Proton acceptor in the catalytic mechanism. Positions 984 to 1011 (HWGRGFDEDKDEDEGSPGGCNPAGGNGG) are disordered. The span at 999-1011 (SPGGCNPAGGNGG) shows a compositional bias: gly residues.

It belongs to the peptidase C19 family. In terms of assembly, homodimer (via C-terminal region). Interacts with HSP90AA1. Ubiquitinated by CHIP/STUB1 in an HSP90-dependent manner; leading to proteasomal degradation. This ubiquitination can be reversed through auto-deubiquitinating activity. As to expression, expressed in testis, pancreas and skeletal muscle.

It localises to the cytoplasm. The protein resides in the mitochondrion. The catalysed reaction is Thiol-dependent hydrolysis of ester, thioester, amide, peptide and isopeptide bonds formed by the C-terminal Gly of ubiquitin (a 76-residue protein attached to proteins as an intracellular targeting signal).. Its function is as follows. Deubiquitinase that plays a role in different processes including cell cycle regulation, mitophagy or endoplasmic reticulum stress. Inhibits TNFalpha-induced NF-kappa-B activation through stabilizing TNIP2 protein via deubiquitination. Plays an essential role during mitosis by deubiquitinating and thereby regulating the levels of Aurora B/AURKB protein. In addition, regulates the protein levels of other key component of the chromosomal passenger complex (CPC) such as survivin/BIRC5 or Borealin/CDCA8 by enhancing their stability. Regulates the degradation of mitochondria through the process of autophagy termed mitophagy. The polypeptide is Ubiquitin carboxyl-terminal hydrolase 35 (USP35) (Homo sapiens (Human)).